A 941-amino-acid polypeptide reads, in one-letter code: HMG box transcription factor BBX (941 aa).

The span at 1 to 18 (MKGSNRNKDHSAEGEGVG) shows a compositional bias: basic and acidic residues. 4 disordered regions span residues 1–21 (MKGS…GKRP), 39–80 (FSEE…EQRA), 157–200 (VKSP…FGMA), and 221–242 (TPEV…LRQK). Acidic residues-rich tracts occupy residues 39 to 52 (FSEE…EEDI) and 63 to 75 (LEQD…DDES). The segment at residues 80 to 148 (ARRPMNAFLL…AFMKANPGYK (69 aa)) is a DNA-binding region (HMG box). Over residues 177-191 (SSRDLPSPKKAKTEE) the composition is skewed to basic and acidic residues. Serine 243 carries the post-translational modification Phosphoserine. The stretch at 326–370 (GRIKELEKGKEEKEIKMEKTDETRLQKEAEFEKSAKENLRDSKEL) forms a coiled coil. Lysine 385 is covalently cross-linked (Glycyl lysine isopeptide (Lys-Gly) (interchain with G-Cter in SUMO2)). The disordered stretch occupies residues 438 to 482 (IEDPAALNKPEKLKKKKKKSKMDRHGNDKSTPKKTCKKRQSSESD). Residues 449-459 (KLKKKKKKSKM) show a composition bias toward basic residues. Phosphoserine is present on residues serine 478 and serine 485. Composition is skewed to basic and acidic residues over residues 499–508 (GIEKLGDTPR) and 536–552 (KKMS…ESRP). Disordered regions lie at residues 499–600 (GIEK…SDCH) and 635–677 (NVDR…KKTK). A Glycyl lysine isopeptide (Lys-Gly) (interchain with G-Cter in SUMO2) cross-link involves residue lysine 573. Low complexity predominate over residues 661-670 (TFSQSGTSGS). Lysine 696 is covalently cross-linked (Glycyl lysine isopeptide (Lys-Gly) (interchain with G-Cter in SUMO2)). Serine 704 carries the post-translational modification Phosphoserine. Disordered stretches follow at residues 714 to 771 (PVPR…DKWS), 803 to 888 (IPSI…SSTP), and 912 to 941 (HRGQ…CADQ). Residues 723-742 (GNVSSEPTKTSKGPFQSQKK) show a composition bias toward polar residues. Residues 743–757 (NLFHKIVSKYKHKKE) are compositionally biased toward basic residues. The span at 758 to 771 (KPNVPEKGSGDKWS) shows a compositional bias: basic and acidic residues. The span at 805–817 (SIFNTPEPTTTQE) shows a compositional bias: polar residues. Serine 822 is modified (phosphoserine). Residues 823 to 834 (QKRKARKTKITH) show a composition bias toward basic residues. Serine 844 is modified (phosphoserine). The segment covering 866 to 882 (TETDCNDKCSHNTEVGE) has biased composition (basic and acidic residues).

The protein resides in the nucleus. Transcription factor that is necessary for cell cycle progression from G1 to S phase. In Homo sapiens (Human), this protein is HMG box transcription factor BBX (BBX).